The primary structure comprises 358 residues: Photosystem II protein D1 (358 aa).

3 helical membrane-spanning segments follow: residues 28–45, 117–132, and 141–155; these read YVGW…AAAI, HFLI…QWEL, and WICV…AAFA. Chlorophyll a is bound at residue His-117. Pheophytin a is bound at residue Trp-125. The [CaMn4O5] cluster site is built by Asp-169 and Glu-188. Residues 196–217 form a helical membrane-spanning segment; sequence FHMIGVAGMFGGSLFSAMHGSL. Position 197 (His-197) interacts with chlorophyll a. A quinone contacts are provided by residues His-214 and 263 to 264; that span reads SF. Residue His-214 coordinates Fe cation. Residue His-271 coordinates Fe cation. Residues 273-287 form a helical membrane-spanning segment; sequence FLAAWPVICIWITSL. The [CaMn4O5] cluster site is built by His-331, Glu-332, Asp-341, and Ala-343. A propeptide spanning residues 344-358 is cleaved from the precursor; the sequence is AAESTPVALIAPAIG.

Belongs to the reaction center PufL/M/PsbA/D family. PSII is composed of 1 copy each of membrane proteins PsbA, PsbB, PsbC, PsbD, PsbE, PsbF, PsbH, PsbI, PsbJ, PsbK, PsbL, PsbM, PsbT, PsbX, PsbY, Psb30/Ycf12, peripheral proteins PsbO, CyanoQ (PsbQ), PsbU, PsbV and a large number of cofactors. It forms dimeric complexes. The cofactor is The D1/D2 heterodimer binds P680, chlorophylls that are the primary electron donor of PSII, and subsequent electron acceptors. It shares a non-heme iron and each subunit binds pheophytin, quinone, additional chlorophylls, carotenoids and lipids. D1 provides most of the ligands for the Mn4-Ca-O5 cluster of the oxygen-evolving complex (OEC). There is also a Cl(-1) ion associated with D1 and D2, which is required for oxygen evolution. The PSII complex binds additional chlorophylls, carotenoids and specific lipids.. Post-translationally, tyr-160 forms a radical intermediate that is referred to as redox-active TyrZ, YZ or Y-Z. C-terminally processed by CtpA; processing is essential to allow assembly of the oxygen-evolving complex and thus photosynthetic growth.

The protein localises to the cellular thylakoid membrane. The catalysed reaction is 2 a plastoquinone + 4 hnu + 2 H2O = 2 a plastoquinol + O2. Functionally, photosystem II (PSII) is a light-driven water:plastoquinone oxidoreductase that uses light energy to abstract electrons from H(2)O, generating O(2) and a proton gradient subsequently used for ATP formation. It consists of a core antenna complex that captures photons, and an electron transfer chain that converts photonic excitation into a charge separation. The D1/D2 (PsbA/PsbD) reaction center heterodimer binds P680, the primary electron donor of PSII as well as several subsequent electron acceptors. This chain is Photosystem II protein D1, found in Prochlorococcus marinus (strain MIT 9313).